The following is a 327-amino-acid chain: Transaldolase (327 aa).

Lys132 (schiff-base intermediate with substrate) is an active-site residue.

It belongs to the transaldolase family. Type 1 subfamily.

Its subcellular location is the cytoplasm. It carries out the reaction D-sedoheptulose 7-phosphate + D-glyceraldehyde 3-phosphate = D-erythrose 4-phosphate + beta-D-fructose 6-phosphate. It functions in the pathway carbohydrate degradation; pentose phosphate pathway; D-glyceraldehyde 3-phosphate and beta-D-fructose 6-phosphate from D-ribose 5-phosphate and D-xylulose 5-phosphate (non-oxidative stage): step 2/3. Transaldolase is important for the balance of metabolites in the pentose-phosphate pathway. The chain is Transaldolase from Chlamydia pneumoniae (Chlamydophila pneumoniae).